The primary structure comprises 62 residues: MAVQKNRKTRSKRGMRRSHDALPAAALTEDSNTGEVHRRHHISPDGMYRGRQVISQGDSDDE.

Residues 1–16 are compositionally biased toward basic residues; it reads MAVQKNRKTRSKRGMR. The interval 1–62 is disordered; it reads MAVQKNRKTR…VISQGDSDDE (62 aa). Over residues 53-62 the composition is skewed to polar residues; that stretch reads VISQGDSDDE.

The protein belongs to the bacterial ribosomal protein bL32 family.

This is Large ribosomal subunit protein bL32 from Alcanivorax borkumensis (strain ATCC 700651 / DSM 11573 / NCIMB 13689 / SK2).